Consider the following 148-residue polypeptide: Large ribosomal subunit protein bL9 (148 aa).

It belongs to the bacterial ribosomal protein bL9 family.

In terms of biological role, binds to the 23S rRNA. The polypeptide is Large ribosomal subunit protein bL9 (Prosthecochloris aestuarii (strain DSM 271 / SK 413)).